Consider the following 2067-residue polypeptide: Separin (2067 aa).

4 disordered regions span residues 51-91, 140-167, 1316-1363, and 1449-1478; these read RTAR…AQDV, KKDASPTKRGTTTKGRVKTSQPDLTDNE, DLEE…SVEA, and LEPKAASESSSKSATRKTRAPTRGTRTKAQ. Residues 55–86 show a composition bias toward low complexity; sequence GTKATATNATASSRAKTTRTKSTSTSTTRTKT. 2 stretches are compositionally biased toward low complexity: residues 1333–1354 and 1449–1461; these read TRQPATTATRRTRSATTSARST and LEPKAASESSSKS. In terms of domain architecture, Peptidase C50 spans 1880-1975; that stretch reads RRNGTYILNP…SGTLTEAGEY (96 aa). The active site involves Cys1964.

It is found in the nucleus. It carries out the reaction All bonds known to be hydrolyzed by this endopeptidase have arginine in P1 and an acidic residue in P4. P6 is often occupied by an acidic residue or by a hydroxy-amino-acid residue, the phosphorylation of which enhances cleavage.. In terms of biological role, required for nuclear division. Could function in the mitotic spindle. This chain is Separin (bimB), found in Emericella nidulans (strain FGSC A4 / ATCC 38163 / CBS 112.46 / NRRL 194 / M139) (Aspergillus nidulans).